We begin with the raw amino-acid sequence, 1486 residues long: MAANVGSMFQYWKRFDLRRLQKELNSVASELSARQEESEHSHKHLIELRREFKKNVPEEIREMVAPVLKSFQAEVVALSKRSQEAEAAFLSVYKQLIEAPDPVPVFEAARSLDDRLQPPSFDPSGQPRRDLHTSWKRNPELLSPKEQREGTSPAGPTLTEGSRLPGIPGKALLTETLLQRNEAEKQKGLQEVQITLAARLGEAEEKIKVLHSALKATQAELLELRRKYDEEAASKADEVGLIMTNLEKANQRAEAAQREVESLREQLASVNSSIRLACCSPQGPSGDKVNFTLCSGPRLEAALASKDREILRLLKDVQHLQSSLQELEEASANQIADLERQLTAKSEAIEKLEEKLQAQSDYEEIKTELSILKAMKLASSTCSLPQGMAKPEDSLLIAKEAFFPTQKFLLEKPSLLASPEEDPSEDDSIKDSLGTEQSYPSPQQLPPPPGPEDPLSPSPGQPLLGPSLGPDGTRTFSLSPFPSLASGERLMMPPAAFKGEAGGLLVFPPAFYGAKPPTAPATPAPGPEPLGGPEPADGGGGGAAGPGAEEEQLDTAEIAFQVKEQLLKHNIGQRVFGHYVLGLSQGSVSEILARPKPWRKLTVKGKEPFIKMKQFLSDEQNVLALRTIQVRQRGSITPRIRTPETGSDDAIKSILEQAKKEIESQKGGEPKTSVAPLSIANGTTPASTSEDAIKSILEQARREMQAQQQALLEMEVAPRGRSVPPSPPERPSLATASQNGAPALVKQEEGSGGPAQAPLPVLSPAAFVQSIIRKVKSEIGDAGYFDHHWASDRGLLSRPYASVSPSLSSSSSSGYSGQPNGRAWPRGDEAPVPPEDEAAAGAEDEPPRTGELKAEGATAEAGARLPYYPAYVPRTLKPTVPPLTPEQYELYMYREVDTLELTRQVKEKLAKNGICQRIFGEKVLGLSQGSVSDMLSRPKPWSKLTQKGREPFIRMQLWLSDQLGQAVGQQPGASQASPTEPRSSPSPPPSPTEPEKSSQEPLSLSLESSKENQQPEGRSSSSLSGKMYSGSQAPGGIQEIVAMSPELDTYSITKRVKEVLTDNNLGQRLFGESILGLTQGSVSDLLSRPKPWHKLSLKGREPFVRMQLWLNDPHNVEKLRDMKKLEKKAYLKRRYGLISTGSDSESPATRSECPSPCLQPQDLSLLQIKKPRVVLAPEEKEALRKAYQLEPYPSQQTIELLSFQLNLKTNTVINWFHNYRSRMRREMLVEGTQDEPDLDPSGGPGILPPGHSHPDPTPQSPDSETEDQKPTVKELELQEGPEENSTPLTTQDKAQVRIKQEQMEEDAEEEAGSQPQDSGELDKGQGPPKEEHPDPPGNDGLPKVAPGPLLPGGSTPDCPSLHPQQESEAGERLHPDPLSFKSASESSRCSLEVSLNSPSAASSPGLMMSVSPVPSSSAPISPSPPGAPPAKVPSASPTADMAGALHPSAKVNPNLQRRHEKMANLNNIIYRVERAANREEALEWEF.

The disordered stretch occupies residues 114 to 167 (DRLQPPSFDPSGQPRRDLHTSWKRNPELLSPKEQREGTSPAGPTLTEGSRLPGI). The span at 127-149 (PRRDLHTSWKRNPELLSPKEQRE) shows a compositional bias: basic and acidic residues. At S143 the chain carries Phosphoserine. A coiled-coil region spans residues 195–374 (TLAARLGEAE…IKTELSILKA (180 aa)). Disordered stretches follow at residues 415 to 481 (LLAS…LSPF), 517 to 549 (PTAP…PGAE), 661 to 690 (EIES…STSE), 716 to 758 (VAPR…AQAP), 800 to 858 (YASV…EGAT), and 964 to 1032 (GQAV…SGSQ). Residues 419–428 (PEEDPSEDDS) show a composition bias toward acidic residues. Residues 443–460 (QQLPPPPGPEDPLSPSPG) show a composition bias toward pro residues. The segment covering 461 to 470 (QPLLGPSLGP) has biased composition (low complexity). Pro residues predominate over residues 517–532 (PTAPATPAPGPEPLGG). Positions 544–631 (AGPGAEEEQL…VLALRTIQVR (88 aa)) form a DNA-binding region, CUT 1. Residues 680–690 (ANGTTPASTSE) show a composition bias toward polar residues. Residues 690–717 (EDAIKSILEQARREMQAQQQALLEMEVA) adopt a coiled-coil conformation. Positions 802–816 (SVSPSLSSSSSSGYS) are enriched in low complexity. The segment covering 834-844 (PEDEAAAGAED) has biased composition (acidic residues). The span at 845–854 (EPPRTGELKA) shows a compositional bias: basic and acidic residues. The segment at residues 887 to 974 (QYELYMYREV…QAVGQQPGAS (88 aa)) is a DNA-binding region (CUT 2). The span at 967 to 976 (VGQQPGASQA) shows a compositional bias: polar residues. Residues 1017-1031 (GRSSSSLSGKMYSGS) are compositionally biased toward low complexity. Residues 1038-1125 (QEIVAMSPEL…VEKLRDMKKL (88 aa)) constitute a DNA-binding region (CUT 3). The segment at residues 1168-1227 (IKKPRVVLAPEEKEALRKAYQLEPYPSQQTIELLSFQLNLKTNTVINWFHNYRSRMRREM) is a DNA-binding region (homeobox). The disordered stretch occupies residues 1231 to 1453 (GTQDEPDLDP…ALHPSAKVNP (223 aa)). Over residues 1266–1276 (EDQKPTVKELE) the composition is skewed to basic and acidic residues. The span at 1283-1293 (ENSTPLTTQDK) shows a compositional bias: polar residues. The span at 1320 to 1334 (ELDKGQGPPKEEHPD) shows a compositional bias: basic and acidic residues. Residues 1381–1401 (KSASESSRCSLEVSLNSPSAA) show a composition bias toward polar residues. The span at 1402 to 1420 (SSPGLMMSVSPVPSSSAPI) shows a compositional bias: low complexity. Pro residues predominate over residues 1421–1431 (SPSPPGAPPAK).

It belongs to the CUT homeobox family.

The protein localises to the nucleus. In terms of biological role, transcription factor involved in the control of neuronal proliferation and differentiation in the brain. Regulates dendrite development and branching, dendritic spine formation, and synaptogenesis in cortical layers II-III. Binds to DNA in a sequence-specific manner. In Homo sapiens (Human), this protein is Homeobox protein cut-like 2 (CUX2).